We begin with the raw amino-acid sequence, 396 residues long: Chalcone synthase (396 aa).

The active site involves C169.

It belongs to the thiolase-like superfamily. Chalcone/stilbene synthases family.

The enzyme catalyses (E)-4-coumaroyl-CoA + 3 malonyl-CoA + 3 H(+) = 2',4,4',6'-tetrahydroxychalcone + 3 CO2 + 4 CoA. It functions in the pathway secondary metabolite biosynthesis; flavonoid biosynthesis. In terms of biological role, the primary product of this enzyme is 4,2',4',6'-tetrahydroxychalcone (also termed naringenin-chalcone or chalcone) which can under specific conditions spontaneously isomerize into naringenin. This Pinus sylvestris (Scotch pine) protein is Chalcone synthase (CHS).